The primary structure comprises 74 residues: DNA gyrase inhibitor YacG (74 aa).

Positions 7, 10, 26, and 30 each coordinate Zn(2+).

The protein belongs to the DNA gyrase inhibitor YacG family. In terms of assembly, interacts with GyrB. Zn(2+) is required as a cofactor.

Inhibits all the catalytic activities of DNA gyrase by preventing its interaction with DNA. Acts by binding directly to the C-terminal domain of GyrB, which probably disrupts DNA binding by the gyrase. The protein is DNA gyrase inhibitor YacG of Shewanella denitrificans (strain OS217 / ATCC BAA-1090 / DSM 15013).